Here is a 234-residue protein sequence, read N- to C-terminus: Cyclo(L-leucyl-L-leucyl) synthase (234 aa).

Serine 28 (nucleophile) is an active-site residue. Substrate-binding positions include 171 to 175, tyrosine 195, and 200 to 201; these read YVLAE and EL.

The protein belongs to the CDPS family.

The catalysed reaction is 2 L-leucyl-tRNA(Leu) = cyclo(L-leucyl-L-leucyl) + 2 tRNA(Leu) + 2 H(+). In terms of biological role, it uses activated amino acids in the form of aminoacyl-tRNAs (aa-tRNAs) as substrates to catalyze the ATP-independent formation of cyclodipeptides which are intermediates in diketopiperazine (DKP) biosynthetic pathways. Catalyzes the formation of cyclo(L-Leu-L-Leu) (cLL) from L-leucyl-tRNA(Leu). Can incorporate various nonpolar residues, such as L-phenylalanine, L-leucine and L-methionine, into cyclodipeptides. This is Cyclo(L-leucyl-L-leucyl) synthase from Staphylococcus haemolyticus (strain JCSC1435).